The sequence spans 164 residues: Large ribosomal subunit protein bL9 (164 aa).

Belongs to the bacterial ribosomal protein bL9 family.

Its function is as follows. Binds to the 23S rRNA. This Psychrobacter sp. (strain PRwf-1) protein is Large ribosomal subunit protein bL9.